The chain runs to 172 residues: Adenine phosphoribosyltransferase (172 aa).

This sequence belongs to the purine/pyrimidine phosphoribosyltransferase family. As to quaternary structure, homodimer.

The protein resides in the cytoplasm. It carries out the reaction AMP + diphosphate = 5-phospho-alpha-D-ribose 1-diphosphate + adenine. It participates in purine metabolism; AMP biosynthesis via salvage pathway; AMP from adenine: step 1/1. In terms of biological role, catalyzes a salvage reaction resulting in the formation of AMP, that is energically less costly than de novo synthesis. The polypeptide is Adenine phosphoribosyltransferase (Clostridium tetani (strain Massachusetts / E88)).